We begin with the raw amino-acid sequence, 380 residues long: Erythronate-4-phosphate dehydrogenase (380 aa).

2 residues coordinate substrate: serine 45 and threonine 66. Residues cysteine 65 and cysteine 90 are joined by a disulfide bond. NAD(+) contacts are provided by residues 126 to 127, aspartate 146, threonine 175, 206 to 208, and aspartate 232; these read QV and ASR. Residue arginine 208 is part of the active site. Glutamate 237 is an active-site residue. Catalysis depends on histidine 254, which acts as the Proton donor. NAD(+) is bound at residue glycine 257. Residue tyrosine 258 participates in substrate binding.

It belongs to the D-isomer specific 2-hydroxyacid dehydrogenase family. PdxB subfamily. In terms of assembly, homodimer.

The protein resides in the cytoplasm. It carries out the reaction 4-phospho-D-erythronate + NAD(+) = (R)-3-hydroxy-2-oxo-4-phosphooxybutanoate + NADH + H(+). It functions in the pathway cofactor biosynthesis; pyridoxine 5'-phosphate biosynthesis; pyridoxine 5'-phosphate from D-erythrose 4-phosphate: step 2/5. Functionally, catalyzes the oxidation of erythronate-4-phosphate to 3-hydroxy-2-oxo-4-phosphonooxybutanoate. The protein is Erythronate-4-phosphate dehydrogenase of Pseudomonas aeruginosa (strain ATCC 15692 / DSM 22644 / CIP 104116 / JCM 14847 / LMG 12228 / 1C / PRS 101 / PAO1).